A 147-amino-acid polypeptide reads, in one-letter code: Cyanate hydratase (147 aa).

Residues R88, E91, and S114 contribute to the active site.

This sequence belongs to the cyanase family.

It carries out the reaction cyanate + hydrogencarbonate + 3 H(+) = NH4(+) + 2 CO2. Catalyzes the reaction of cyanate with bicarbonate to produce ammonia and carbon dioxide. The chain is Cyanate hydratase from Thiobacillus denitrificans (strain ATCC 25259 / T1).